Consider the following 621-residue polypeptide: Bifunctional 3'-phosphoadenosine 5'-phosphosulfate synthase 2 (621 aa).

An adenylyl-sulfate kinase region spans residues 1-216; the sequence is MSANFKMNHK…VVELLQEQNI (216 aa). 53 to 58 provides a ligand contact to ATP; sequence GAGKTT. Adenosine 5'-phosphosulfate is bound by residues 80-83, Phe92, 97-100, 123-124, Lys162, and 175-176; these read DNVR, REEN, IS, and GF. ATP is bound by residues Ser198, 415–418, 517–521, and Ala559; these read QLRN and GRDPA. Residues 225–621 are sulfate adenylyltransferase; it reads IHELFVPENK…DYYRSLEKTN (397 aa).

The protein in the N-terminal section; belongs to the APS kinase family. This sequence in the C-terminal section; belongs to the sulfate adenylyltransferase family. As to expression, expressed in liver, cartilage, skin and brain.

It carries out the reaction sulfate + ATP + H(+) = adenosine 5'-phosphosulfate + diphosphate. It catalyses the reaction adenosine 5'-phosphosulfate + ATP = 3'-phosphoadenylyl sulfate + ADP + H(+). The protein operates within sulfur metabolism; sulfate assimilation. Bifunctional enzyme with both ATP sulfurylase and APS kinase activity, which mediates two steps in the sulfate activation pathway. The first step is the transfer of a sulfate group to ATP to yield adenosine 5'-phosphosulfate (APS), and the second step is the transfer of a phosphate group from ATP to APS yielding 3'-phosphoadenylylsulfate/PAPS, the activated sulfate donor used by sulfotransferases. In mammals, PAPS is the sole source of sulfate while APS appears to only be an intermediate in the sulfate-activation pathway. May have an important role in skeletogenesis during postnatal growth. The sequence is that of Bifunctional 3'-phosphoadenosine 5'-phosphosulfate synthase 2 (Papss2) from Mus musculus (Mouse).